The following is a 118-amino-acid chain: Holo-[acyl-carrier-protein] synthase (118 aa).

Residues Asp8 and Glu60 each coordinate Mg(2+).

This sequence belongs to the P-Pant transferase superfamily. AcpS family. The cofactor is Mg(2+).

It is found in the cytoplasm. The enzyme catalyses apo-[ACP] + CoA = holo-[ACP] + adenosine 3',5'-bisphosphate + H(+). In terms of biological role, transfers the 4'-phosphopantetheine moiety from coenzyme A to a Ser of acyl-carrier-protein. The chain is Holo-[acyl-carrier-protein] synthase from Wolbachia sp. subsp. Drosophila simulans (strain wRi).